Consider the following 642-residue polypeptide: Threonine--tRNA ligase (642 aa).

Residues M1–T61 form the TGS domain. The interval D243–P534 is catalytic. Zn(2+) contacts are provided by C334, H385, and H511.

Belongs to the class-II aminoacyl-tRNA synthetase family. Homodimer. Requires Zn(2+) as cofactor.

The protein localises to the cytoplasm. It carries out the reaction tRNA(Thr) + L-threonine + ATP = L-threonyl-tRNA(Thr) + AMP + diphosphate + H(+). In terms of biological role, catalyzes the attachment of threonine to tRNA(Thr) in a two-step reaction: L-threonine is first activated by ATP to form Thr-AMP and then transferred to the acceptor end of tRNA(Thr). Also edits incorrectly charged L-seryl-tRNA(Thr). The protein is Threonine--tRNA ligase of Yersinia pseudotuberculosis serotype O:1b (strain IP 31758).